The primary structure comprises 485 residues: Eukaryotic translation initiation factor 3 subunit E (485 aa).

Residues 219–391 (NQPDGPDGIV…GEIHITKPVT (173 aa)) form the PCI domain. The interval 444 to 485 (QGGGKSNKKGDYKKGDYKKGGDFKKGGDFKKGGDHKKRAWVK) is disordered. Residues 451–475 (KKGDYKKGDYKKGGDFKKGGDFKKG) are compositionally biased toward basic and acidic residues. Residues 476-485 (GDHKKRAWVK) are compositionally biased toward basic residues.

Belongs to the eIF-3 subunit E family. Component of the eukaryotic translation initiation factor 3 (eIF-3) complex.

It localises to the cytoplasm. In terms of biological role, component of the eukaryotic translation initiation factor 3 (eIF-3) complex, which is involved in protein synthesis of a specialized repertoire of mRNAs and, together with other initiation factors, stimulates binding of mRNA and methionyl-tRNAi to the 40S ribosome. The eIF-3 complex specifically targets and initiates translation of a subset of mRNAs involved in cell proliferation. The polypeptide is Eukaryotic translation initiation factor 3 subunit E (Monosiga brevicollis (Choanoflagellate)).